We begin with the raw amino-acid sequence, 1137 residues long: Ribonucleoside-diphosphate reductase large subunit (1137 aa).

The interval 1–32 (MASRPAASSPVEARAPVGGQEAGGPSAATQGE) is disordered. An RIP homotypic interaction motif (RHIM) motif is present at residues 64 to 84 (SYRISDNNFVQCGSNCTMIID). Disordered stretches follow at residues 124 to 159 (GGTPRRSAGTSTGTQTADVPTEALGGPPPPPRFTLG) and 173 to 315 (AVFG…YPVP). Over residues 131–141 (AGTSTGTQTAD) the composition is skewed to polar residues. Residues 196–206 (SDSDDSEDTDS) show a composition bias toward acidic residues. The span at 281–290 (AGAGLAADPA) shows a compositional bias: low complexity. Positions 291-304 (VARDDAEGLSDPRP) are enriched in basic and acidic residues. Residues Thr-566, 581–582 (SC), Gly-612, 791–795 (NLCTE), and 968–972 (PTAAS) contribute to the substrate site. Residues Cys-582 and Cys-808 are joined by a disulfide bond. The active-site Proton acceptor is the Asn-791. Cys-793 (cysteine radical intermediate) is an active-site residue. Residue Glu-795 is the Proton acceptor of the active site.

Belongs to the ribonucleoside diphosphate reductase large chain family. Heterotetramer composed of a homodimer of the large subunit (R1) and a homodimer of the small subunit (R2). Larger multisubunit protein complex are also active, composed of (R1)n(R2)n. Self-assembles (via RIP homotypic interaction motif/RHIM) into homomeric fibrillar amyloid structures. Interacts (via RHIM) with human RIPK1 (via RHIM). Interacts (via RHIM) with human RIPK3 (via RHIM); the interaction leads to heteromeric amyloid assemblies. Interacts (via RHIM) with human ZBP1 (via RHIM); the interaction leads to heteromeric amyloid assemblies. Interacts (via C-terminus) with host CASP8.

The enzyme catalyses a 2'-deoxyribonucleoside 5'-diphosphate + [thioredoxin]-disulfide + H2O = a ribonucleoside 5'-diphosphate + [thioredoxin]-dithiol. Ribonucleoside-diphosphate reductase holoenzyme that provides the precursors necessary for viral DNA synthesis. Allows virus growth in non-dividing cells, as well as reactivation from latency in infected hosts. Catalyzes the biosynthesis of deoxyribonucleotides from the corresponding ribonucleotides. Prevents host necroptosis by targeting host RIPK1 and RIPK3, thereby hampering the formation of necroptotic RIPK1-RIPK3 complexes. Forms hetero-amyloid structures with host proteins RIPK3 or ZBP1 which may prevent RIPK3- and ZBP1-mediated necroptosis. In addition, inhibits extrinsic apoptosis by targeting host CASP8. In Human herpesvirus 1 (strain 17) (HHV-1), this protein is Ribonucleoside-diphosphate reductase large subunit.